The primary structure comprises 719 residues: Glycine--tRNA ligase beta subunit (719 aa).

The interval 65–84 (PDREEEIKGPPAKAAFKDGK) is disordered.

The protein belongs to the class-II aminoacyl-tRNA synthetase family. In terms of assembly, tetramer of two alpha and two beta subunits.

The protein resides in the cytoplasm. The catalysed reaction is tRNA(Gly) + glycine + ATP = glycyl-tRNA(Gly) + AMP + diphosphate. The protein is Glycine--tRNA ligase beta subunit of Trichodesmium erythraeum (strain IMS101).